Reading from the N-terminus, the 96-residue chain is Cell division topological specificity factor (96 aa).

It belongs to the MinE family.

In terms of biological role, prevents the cell division inhibition by proteins MinC and MinD at internal division sites while permitting inhibition at polar sites. This ensures cell division at the proper site by restricting the formation of a division septum at the midpoint of the long axis of the cell. The chain is Cell division topological specificity factor from Nitrosococcus oceani (strain ATCC 19707 / BCRC 17464 / JCM 30415 / NCIMB 11848 / C-107).